Reading from the N-terminus, the 571-residue chain is Proline--tRNA ligase (571 aa).

It belongs to the class-II aminoacyl-tRNA synthetase family. ProS type 1 subfamily. As to quaternary structure, homodimer.

It localises to the cytoplasm. The enzyme catalyses tRNA(Pro) + L-proline + ATP = L-prolyl-tRNA(Pro) + AMP + diphosphate. Its function is as follows. Catalyzes the attachment of proline to tRNA(Pro) in a two-step reaction: proline is first activated by ATP to form Pro-AMP and then transferred to the acceptor end of tRNA(Pro). As ProRS can inadvertently accommodate and process non-cognate amino acids such as alanine and cysteine, to avoid such errors it has two additional distinct editing activities against alanine. One activity is designated as 'pretransfer' editing and involves the tRNA(Pro)-independent hydrolysis of activated Ala-AMP. The other activity is designated 'posttransfer' editing and involves deacylation of mischarged Ala-tRNA(Pro). The misacylated Cys-tRNA(Pro) is not edited by ProRS. This chain is Proline--tRNA ligase, found in Actinobacillus pleuropneumoniae serotype 3 (strain JL03).